Consider the following 88-residue polypeptide: MTSEVEQPTAMSEALGYEQARDELIEVVRRLEAGGTTLEESLALWERGEELAEVCRRRLDGARARLDAALAEEADPEDGASGADGGGA.

The interval 69–88 (ALAEEADPEDGASGADGGGA) is disordered.

Belongs to the XseB family. As to quaternary structure, heterooligomer composed of large and small subunits.

The protein localises to the cytoplasm. It catalyses the reaction Exonucleolytic cleavage in either 5'- to 3'- or 3'- to 5'-direction to yield nucleoside 5'-phosphates.. In terms of biological role, bidirectionally degrades single-stranded DNA into large acid-insoluble oligonucleotides, which are then degraded further into small acid-soluble oligonucleotides. This Streptomyces coelicolor (strain ATCC BAA-471 / A3(2) / M145) protein is Exodeoxyribonuclease 7 small subunit.